A 233-amino-acid polypeptide reads, in one-letter code: Small ribosomal subunit protein uS3 (233 aa).

The KH type-2 domain maps to 39 to 107 (VRQFLMKKLV…PAQINISEVR (69 aa)).

The protein belongs to the universal ribosomal protein uS3 family. In terms of assembly, part of the 30S ribosomal subunit. Forms a tight complex with proteins S10 and S14.

In terms of biological role, binds the lower part of the 30S subunit head. Binds mRNA in the 70S ribosome, positioning it for translation. This is Small ribosomal subunit protein uS3 from Buchnera aphidicola subsp. Schizaphis graminum (strain Sg).